A 142-amino-acid chain; its full sequence is Matrix protein (142 aa).

GMP-binding positions include 64–66 (DVE) and Ala-117.

In terms of assembly, homooligomer. Homotetramer. Interacts with phosphoprotein P. Binds to ssRNA. Not glycosylated.

The protein resides in the virion. It is found in the host cytoplasm. It localises to the host cell membrane. Plays a crucial role in virion assembly and budding. The polypeptide is Matrix protein (M) (Bos taurus (Bovine)).